A 444-amino-acid polypeptide reads, in one-letter code: 23S rRNA (uracil(1939)-C(5))-methyltransferase RlmD (444 aa).

The region spanning 5-67 (RNRFDRTPFQ…RHFDEAKTVE (63 aa)) is the TRAM domain. Positions 80, 86, 89, and 168 each coordinate [4Fe-4S] cluster. 6 residues coordinate S-adenosyl-L-methionine: Q276, F305, N310, E326, D353, and D374. The Nucleophile role is filled by C400.

Belongs to the class I-like SAM-binding methyltransferase superfamily. RNA M5U methyltransferase family. RlmD subfamily.

It carries out the reaction uridine(1939) in 23S rRNA + S-adenosyl-L-methionine = 5-methyluridine(1939) in 23S rRNA + S-adenosyl-L-homocysteine + H(+). Its function is as follows. Catalyzes the formation of 5-methyl-uridine at position 1939 (m5U1939) in 23S rRNA. The protein is 23S rRNA (uracil(1939)-C(5))-methyltransferase RlmD of Xanthomonas campestris pv. campestris (strain 8004).